Here is a 633-residue protein sequence, read N- to C-terminus: Laccase ARB_05828 (633 aa).

A signal peptide spans 1–16 (MKRLGLAALYIGSALA). Positions 22-47 (GPPSRNVPRDDFPMFNPLPSTDLNTR) are excised as a propeptide. The N-linked (GlcNAc...) asparagine glycan is linked to Asn-143. Cu cation is bound by residues His-148, His-150, His-192, and His-194. An intrachain disulfide couples Cys-169 to Cys-607. The 130-residue stretch at 224 to 353 (LLMTDHLHSS…GRYWVRTTPA (130 aa)) folds into the Plastocyanin-like domain. Residues Asn-286 and Asn-456 are each glycosylated (N-linked (GlcNAc...) asparagine). The Cu cation site is built by His-508, His-511, His-513, His-568, Cys-569, His-570, and His-574.

Belongs to the multicopper oxidase family. Monomer. Cu cation serves as cofactor.

The protein localises to the secreted. The enzyme catalyses 4 hydroquinone + O2 = 4 benzosemiquinone + 2 H2O. The sequence is that of Laccase ARB_05828 from Arthroderma benhamiae (strain ATCC MYA-4681 / CBS 112371) (Trichophyton mentagrophytes).